Consider the following 566-residue polypeptide: Glucose starvation modulator protein 1 (566 aa).

Positions 20–48 (CVFCHQKHLQCSNERPCKNCVKRNIAHGC) form a DNA-binding region, zn(2)-C6 fungal-type. Disordered regions lie at residues 63–92 (GVPG…SPMD) and 250–270 (KQAS…NTLS). A compositionally biased stretch (low complexity) spans 253 to 270 (SPSPSNTSTSENNTNTLS).

Belongs to the ERT1/acuK family.

Its subcellular location is the nucleus. Its function is as follows. Transcription factor which regulates nonfermentable carbon utilization. The polypeptide is Glucose starvation modulator protein 1 (GSM1) (Candida albicans (strain WO-1) (Yeast)).